The chain runs to 189 residues: EIHFTRTMHGIMRNITHFCSRTKSRTWGKDGWQKIVVCIIADGRQKVHPRTLNALAAMGVYQDGIAKNIVNQKPVNAHVYEYTTQVSLDPDLKFKGAEKGYKPCQIIFCLKERNEKKLNSHRWFFNAFGRALTPNVCILLDVGTKPAPTALYHLWKAFDQDSNVAGAAGEIKAGKGKGWLGLFNPLVAS.

It belongs to the chitin synthase family. Class II subfamily.

It localises to the cell membrane. The catalysed reaction is [(1-&gt;4)-N-acetyl-beta-D-glucosaminyl](n) + UDP-N-acetyl-alpha-D-glucosamine = [(1-&gt;4)-N-acetyl-beta-D-glucosaminyl](n+1) + UDP + H(+). Its function is as follows. Polymerizes chitin, a structural polymer of the cell wall and septum, by transferring the sugar moiety of UDP-GlcNAc to the non-reducing end of the growing chitin polymer. The chain is Chitin synthase 2 (CHS2) from Ajellomyces dermatitidis (Blastomyces dermatitidis).